A 368-amino-acid chain; its full sequence is tRNA/tmRNA (uracil-C(5))-methyltransferase (368 aa).

The S-adenosyl-L-methionine site is built by Q192, Y220, N225, E241, and D301. The Nucleophile role is filled by C326. The Proton acceptor role is filled by E360.

Belongs to the class I-like SAM-binding methyltransferase superfamily. RNA M5U methyltransferase family. TrmA subfamily.

The enzyme catalyses uridine(54) in tRNA + S-adenosyl-L-methionine = 5-methyluridine(54) in tRNA + S-adenosyl-L-homocysteine + H(+). It carries out the reaction uridine(341) in tmRNA + S-adenosyl-L-methionine = 5-methyluridine(341) in tmRNA + S-adenosyl-L-homocysteine + H(+). Functionally, dual-specificity methyltransferase that catalyzes the formation of 5-methyluridine at position 54 (m5U54) in all tRNAs, and that of position 341 (m5U341) in tmRNA (transfer-mRNA). This is tRNA/tmRNA (uracil-C(5))-methyltransferase from Actinobacillus pleuropneumoniae serotype 7 (strain AP76).